A 235-amino-acid polypeptide reads, in one-letter code: Ion-translocating oxidoreductase complex subunit E (235 aa).

5 helical membrane-spanning segments follow: residues 63–83 (LGLS…ISLF), 93–113 (IPIY…LMNA), 117–137 (TLYQ…IIIG), 152–172 (IWDG…LGAL), and 206–226 (SFLL…LLAI).

The protein belongs to the NqrDE/RnfAE family. In terms of assembly, the complex is composed of six subunits: RnfA, RnfB, RnfC, RnfD, RnfE and RnfG.

The protein localises to the cell inner membrane. Part of a membrane-bound complex that couples electron transfer with translocation of ions across the membrane. The protein is Ion-translocating oxidoreductase complex subunit E of Haemophilus influenzae (strain PittEE).